We begin with the raw amino-acid sequence, 369 residues long: Anhydro-N-acetylmuramic acid kinase (369 aa).

Position 12–19 (12–19) interacts with ATP; sequence GTSLDGVD.

Belongs to the anhydro-N-acetylmuramic acid kinase family.

The enzyme catalyses 1,6-anhydro-N-acetyl-beta-muramate + ATP + H2O = N-acetyl-D-muramate 6-phosphate + ADP + H(+). The protein operates within amino-sugar metabolism; 1,6-anhydro-N-acetylmuramate degradation. It participates in cell wall biogenesis; peptidoglycan recycling. In terms of biological role, catalyzes the specific phosphorylation of 1,6-anhydro-N-acetylmuramic acid (anhMurNAc) with the simultaneous cleavage of the 1,6-anhydro ring, generating MurNAc-6-P. Is required for the utilization of anhMurNAc either imported from the medium or derived from its own cell wall murein, and thus plays a role in cell wall recycling. In Shigella boydii serotype 4 (strain Sb227), this protein is Anhydro-N-acetylmuramic acid kinase.